We begin with the raw amino-acid sequence, 709 residues long: F-box only protein 40 (709 aa).

A TRAF-type zinc finger spans residues 53 to 112 (EHQLLCPLEQVPCLNSEYGCPLSMSRHKLAKHLQVCPASVVCCSMEWNRWPNVDSETTLH). Positions 232 to 280 (TNSSASCESKNKNDSEKEQISSGHNMVEGEGAPKKKEPQENQKQQDVRT) are disordered. 2 stretches are compositionally biased toward basic and acidic residues: residues 240-250 (SKNKNDSEKEQ) and 262-277 (GAPKKKEPQENQKQQD). The F-box domain occupies 570–624 (QNSLTSLPLEILKYIAGFLDSVSLAQLSQVSVLMRNICATLLQERGMVLLQWKKK).

As to quaternary structure, directly interacts with SKP1 and CUL1. Expressed only in heart and skeletal muscle.

The protein localises to the cytoplasm. Its function is as follows. Probable substrate-recognition component of the SCF (SKP1-CUL1-F-box protein)-type E3 ubiquitin ligase complex that may function in myogenesis. This chain is F-box only protein 40 (FBXO40), found in Homo sapiens (Human).